The following is an 853-amino-acid chain: MESQYNAAEIEQKWQQDWVNQGLDKTPENSDKPKFYALSMFPYPSGNLHMGHVRNYVITDVIARLKRLQGYRVLHPMGWDAFGLPAENAAIDRNIPPADWTYKNIAQMKQQLQTLGLSIDWDREVATCSPDYYKWTQWLFLQFYQAGLAYQKEAAVNWDPIDQTVLANEQVDSEGYSWRSGAKVERKLLRQWFFKITDYAEQLLTDLDKLTGWPDRVKLMQENWIGKSVGAYLEFPVKGSEEKIAVFTTRPDTVYGVTYVVLAPEHPLTPKVTTEGQKEAVEAFIEEVSNESEIERTAEDKPKRGILTGGTAVNPFNGEEIPILIADYVLYEYGTGAVMGVPAHDTRDFKFATEKELPIKVVIVPENSEDNNPTLTEAYTEPGIMVNSGEFNGMQSTEGKTAIINYAEKQGYGKARIQYRLRDWLISRQRYWGCPIPVVHCPSCGTVAVPDADLPVKLPENVEFTGRGASPLAKMEDWINVPCPSCGEPAKRETDTMDTFIDSSWYYLRYTDAMNDQEAFKLEKANDWMNVDQYVGGIEHAILHLLYSRFFTKVLRDRGLVNVDEPFKRLLTQGMVQAMAYKNPKTGKYIPVDKVNPESPKDPDTGDDLEVFYEKMSKSKYNGVDPQKVLGKYGADTARMFILFKAPPEKDLEWDDADVEGQFRFLNRVWRLVNGYEKKQGEVISNKELSKEEKDLRRAIHTAIKEISEDLEGDYQFNTAVSELMKLSNALNDAKCINSEVYQEGIETLLILLAPFAPHIAEELWHNLGHETSIHLETWPQVDPDALVVDEITLVIQIMGKTRGTIQVPANSSKEELEKLARESDIGQRNLDGKEVKKVIVVPGKLVNFVVPK.

The short motif at 42–52 (PYPSGNLHMGH) is the 'HIGH' region element. Positions 615-619 (KMSKS) match the 'KMSKS' region motif. An ATP-binding site is contributed by lysine 618.

It belongs to the class-I aminoacyl-tRNA synthetase family.

It localises to the cytoplasm. It carries out the reaction tRNA(Leu) + L-leucine + ATP = L-leucyl-tRNA(Leu) + AMP + diphosphate. The sequence is that of Leucine--tRNA ligase from Crocosphaera subtropica (strain ATCC 51142 / BH68) (Cyanothece sp. (strain ATCC 51142)).